Here is a 487-residue protein sequence, read N- to C-terminus: Glucose starvation modulator protein 1 (487 aa).

The tract at residues 1 to 75 (MSIRFPEIPG…KRLTPQEKKA (75 aa)) is disordered. The segment covering 59–68 (SFSSSMTKRL) has biased composition (polar residues). A DNA-binding region (zn(2)-C6 fungal-type) is located at residues 83–111 (CVFCHSKHLQCSHSRPCQNCIKRNLAHEC). Over residues 122–139 (MSTTEVPAVSGESSSESG) the composition is skewed to polar residues. Residues 122-158 (MSTTEVPAVSGESSSESGRATGENGSEMGNPPDPQIA) are disordered. Positions 348–420 (CLLDYENLSR…FRLFESVAVG (73 aa)) constitute a PAS domain.

The protein belongs to the ERT1/acuK family.

It is found in the nucleus. In terms of biological role, transcription factor which regulates nonfermentable carbon utilization. The chain is Glucose starvation modulator protein 1 (GSM1) from Clavispora lusitaniae (strain ATCC 42720) (Yeast).